Here is a 911-residue protein sequence, read N- to C-terminus: DNA mismatch repair protein MutS (911 aa).

Residues 1–10 (MDNKTDHKND) are compositionally biased toward basic and acidic residues. A disordered region spans residues 1–24 (MDNKTDHKNDLNSQPVPSSAPHKE). Residue 662-669 (GPNMGGKS) participates in ATP binding.

This sequence belongs to the DNA mismatch repair MutS family.

Its function is as follows. This protein is involved in the repair of mismatches in DNA. It is possible that it carries out the mismatch recognition step. This protein has a weak ATPase activity. This is DNA mismatch repair protein MutS from Bartonella quintana (strain Toulouse) (Rochalimaea quintana).